The following is a 268-amino-acid chain: Ribosomal RNA small subunit methyltransferase A (268 aa).

Residues N23, L25, G50, E72, D94, and N116 each contribute to the S-adenosyl-L-methionine site.

The protein belongs to the class I-like SAM-binding methyltransferase superfamily. rRNA adenine N(6)-methyltransferase family. RsmA subfamily.

The protein resides in the cytoplasm. It carries out the reaction adenosine(1518)/adenosine(1519) in 16S rRNA + 4 S-adenosyl-L-methionine = N(6)-dimethyladenosine(1518)/N(6)-dimethyladenosine(1519) in 16S rRNA + 4 S-adenosyl-L-homocysteine + 4 H(+). Functionally, specifically dimethylates two adjacent adenosines (A1518 and A1519) in the loop of a conserved hairpin near the 3'-end of 16S rRNA in the 30S particle. May play a critical role in biogenesis of 30S subunits. The sequence is that of Ribosomal RNA small subunit methyltransferase A from Mycoplasmoides gallisepticum (strain R(low / passage 15 / clone 2)) (Mycoplasma gallisepticum).